A 63-amino-acid chain; its full sequence is Large ribosomal subunit protein bL35 (63 aa).

Positions 24–44 are disordered; that stretch reads RAKAYRSHRATGKTTKQKRQL.

Belongs to the bacterial ribosomal protein bL35 family.

This is Large ribosomal subunit protein bL35 from Mycoplasma mycoides subsp. mycoides SC (strain CCUG 32753 / NCTC 10114 / PG1).